The following is a 348-amino-acid chain: CCAAT/enhancer-binding protein beta (348 aa).

Residues 1–24 (MQRLVVWDPVCLPLPPPPPAFKSM) are required for Lys-174 sumoylation. Residue R3 is modified to Asymmetric dimethylarginine; by CARM1. A required for MYC transcriptional repression region spans residues 24–135 (MEVANFYYEA…YGGKNCKKAA (112 aa)). Position 43 is an N6-acetyllysine; alternate (K43). K43 carries the N6-methylated lysine; alternate modification. Disordered stretches follow at residues 44-65 (AAPAAPPADRPGPRPPTGELGS) and 79-112 (LEPLGAPQAPAPTTASDTFEAAPSAPAPVPASSG). The span at 47-59 (AAPPADRPGPRPP) shows a compositional bias: pro residues. The 9aaTAD signature appears at 116-124 (DFLSDLFSD). 2 positions are modified to N6-acetyllysine; by KAT2A and KAT2B: K129 and K132. K133 carries the N6-acetyllysine; by KAT2A and KAT2B; alternate modification. K133 is covalently cross-linked (Glycyl lysine isopeptide (Lys-Gly) (interchain with G-Cter in SUMO2); alternate). A disordered region spans residues 158-178 (APLHPPPPPPPPPAELKAEPG). Residues 160–171 (LHPPPPPPPPPA) show a composition bias toward pro residues. K174 is covalently cross-linked (Glycyl lysine isopeptide (Lys-Gly) (interchain with G-Cter in SUMO2); alternate). Residue K174 forms a Glycyl lysine isopeptide (Lys-Gly) (interchain with G-Cter in SUMO); alternate linkage. Residues K185 and K187 each participate in a glycyl lysine isopeptide (Lys-Gly) (interchain with G-Cter in SUMO2) cross-link. The segment covering 219–259 (SGSSGSLSTSSSSSPPGTPSPADAKATPAAAACYAGAAPAP) has biased composition (low complexity). The disordered stretch occupies residues 219 to 277 (SGSSGSLSTSSSSSPPGTPSPADAKATPAAAACYAGAAPAPSQVKSKAKKTVDKHSDEY). Residue T227 is modified to Phosphothreonine; by GSK3-beta. O-linked (GlcNAc) serine glycosylation is found at S228 and S229. At S232 the chain carries Phosphoserine; by GSK3-beta. Phosphothreonine; by RPS6KA1, CDK2 and MAPK is present on T236. Residues K263 and K265 each participate in a glycyl lysine isopeptide (Lys-Gly) (interchain with G-Cter in SUMO2) cross-link. A compositionally biased stretch (basic and acidic residues) spans 268–277 (KTVDKHSDEY). Residue T269 is modified to Phosphothreonine; by RPS6KA1 and PKC/PRKCA. The bZIP domain maps to 274 to 337 (SDEYKIRRER…STLRNLFKTL (64 aa)). The basic motif stretch occupies residues 278-298 (KIRRERNNIAVRKSRDKAKMR). S291 bears the Phosphoserine; by PKC/PRKCA mark. The interval 300–307 (LETQHKVL) is leucine-zipper. Position 328 is a phosphoserine; by CaMK2 (S328). K335 participates in a covalent cross-link: Glycyl lysine isopeptide (Lys-Gly) (interchain with G-Cter in SUMO2).

This sequence belongs to the bZIP family. C/EBP subfamily. In terms of assembly, binds DNA as a homodimer and as a heterodimer. Interacts with ATF4. Binds DNA as a heterodimer with ATF4. Interacts with MYB; within the complex, MYB and CEBPB bind to different promoter regions. Can form stable heterodimers with CEBPA, CEBPD and CEBPG. Interacts with SIX1. Interacts with TRIM28 and PTGES2. Interacts with PRDM16. Interacts with CCDC85B. Forms a complex with THOC5. Interacts with ZNF638; this interaction increases transcriptional activation. Interacts with CIDEA and CIDEC; these interactions increase transcriptional activation of a subset of CEBPB downstream target genes. Interacts with DDIT3/CHOP. Interacts with EP300; recruits EP300 to chromatin. Interacts with RORA; the interaction disrupts interaction with EP300. Interacts (not methylated) with MED23, MED26, SMARCA2, SMARCB1 and SMARCC1. Interacts with KAT2A and KAT2B. Interacts with ATF5; EP300 is required for ATF5 and CEBPB interaction and DNA binding. Interacts with NFE2L1; the heterodimer represses expression of DSPP during odontoblast differentiation. Methylated. Methylation at Arg-3 by CARM1 and at Lys-43 by EHMT2 inhibit transactivation activity. Methylation is probably inhibited by phosphorylation at Thr-236. Post-translationally, sumoylated by polymeric chains of SUMO2 or SUMO3. Sumoylation at Lys-174 is required for inhibition of T-cells proliferation. In adipocytes, sumoylation at Lys-174 by PIAS1 leads to ubiquitination and subsequent proteasomal degradation. Desumoylated by SENP2, which abolishes ubiquitination and stabilizes protein levels. In terms of processing, ubiquitinated, leading to proteasomal degradation. Phosphorylated at Thr-236 by MAPK and CDK2, serves to prime phosphorylation at Thr-227 and Ser-232 by GSK3B and acquire DNA-binding as well as transactivation activities, required to induce adipogenesis. MAPK and CDK2 act sequentially to maintain Thr-236 in the primed phosphorylated state during mitotical cloning expansion and thereby progression of terminal differentiation. Phosphorylation at Thr-269 enhances transactivation activity. Phosphorylation at Ser-328 in response to calcium increases transactivation activity. Phosphorylated at Thr-236 by RPS6KA1. Post-translationally, O-glycosylated, glycosylation at Ser-228 and Ser-229 prevents phosphorylation on Thr-236, Ser-232 and Thr-227 and DNA binding activity which delays the adipocyte differentiation program. In terms of processing, acetylated. Acetylation at Lys-43 is an important and dynamic regulatory event that contributes to its ability to transactivate target genes, including those associated with adipogenesis and adipocyte function. Deacetylation by HDAC1 represses its transactivation activity. Acetylated by KAT2A and KAT2B within a cluster of lysine residues between amino acids 129-133, this acetylation is strongly induced by glucocorticoid treatment and enhances transactivation activity.

The protein resides in the nucleus. The protein localises to the cytoplasm. In terms of biological role, important transcription factor regulating the expression of genes involved in immune and inflammatory responses. Also plays a significant role in adipogenesis, as well as in the gluconeogenic pathway, liver regeneration, and hematopoiesis. The consensus recognition site is 5'-T[TG]NNGNAA[TG]-3'. Its functional capacity is governed by protein interactions and post-translational protein modifications. During early embryogenesis, plays essential and redundant roles with CEBPA. Has a promitotic effect on many cell types such as hepatocytes and adipocytes but has an antiproliferative effect on T-cells by repressing MYC expression, facilitating differentiation along the T-helper 2 lineage. Binds to regulatory regions of several acute-phase and cytokines genes and plays a role in the regulation of acute-phase reaction and inflammation. Also plays a role in intracellular bacteria killing. During adipogenesis, is rapidly expressed and, after activation by phosphorylation, induces CEBPA and PPARG, which turn on the series of adipocyte genes that give rise to the adipocyte phenotype. The delayed transactivation of the CEBPA and PPARG genes by CEBPB appears necessary to allow mitotic clonal expansion and thereby progression of terminal differentiation. Essential for female reproduction because of a critical role in ovarian follicle development. Restricts osteoclastogenesis: together with NFE2L1; represses expression of DSPP during odontoblast differentiation. This chain is CCAAT/enhancer-binding protein beta (CEBPB), found in Bos taurus (Bovine).